Reading from the N-terminus, the 315-residue chain is BTB/POZ domain-containing adapter for CUL3-mediated RhoA degradation protein 3 (315 aa).

M1 bears the N-acetylmethionine mark. S23 bears the Phosphoserine mark. Residues 32-100 form the BTB domain; that stretch reads KYVKLNVGGA…LRDGGVPLPE (69 aa). Residues 239–245 carry the PCNA-binding motif; the sequence is QTKVEFP. A disordered region spans residues 269 to 294; it reads NALLEATGGAAGRSHHLDEDEERERE.

The protein belongs to the BACURD family. Homotetramer; forms a two-fold symmetric tetramer in solution. Interacts with CUL3; interaction is direct and forms a 5:5 heterodecamer. Component of the BCR(BACURD3) E3 ubiquitin ligase complex, at least composed of CUL3, KCTD10/BACURD3 and RBX1. Interacts with DNA polymerase delta subunit 2/POLD2. Interacts with PCNA. Associated with the tectonic-like complex (also named B9 complex); however as Kctd10 has not been identified in all tectonic-like complexes purifications it is unclear whether it is really part of the complex.

The protein localises to the nucleus. It functions in the pathway protein modification; protein ubiquitination. Functionally, substrate-specific adapter of a BCR (BTB-CUL3-RBX1) E3 ubiquitin-protein ligase complex. The BCR(BACURD3) E3 ubiquitin ligase complex mediates the ubiquitination of target proteins, leading to their degradation by the proteasome. This chain is BTB/POZ domain-containing adapter for CUL3-mediated RhoA degradation protein 3 (Kctd10), found in Mus musculus (Mouse).